Here is a 443-residue protein sequence, read N- to C-terminus: D-inositol 3-phosphate glycosyltransferase (443 aa).

Residue H26 coordinates 1D-myo-inositol 3-phosphate. UDP-N-acetyl-alpha-D-glucosamine contacts are provided by residues 32 to 33 (QP) and G40. Residues 37–42 (DAGGMN), K95, Y128, T152, and R172 contribute to the 1D-myo-inositol 3-phosphate site. 3 residues coordinate UDP-N-acetyl-alpha-D-glucosamine: R246, K251, and Q304. Positions 313, 314, and 316 each coordinate Mg(2+). Residues E326 and E334 each contribute to the UDP-N-acetyl-alpha-D-glucosamine site. Position 340 (T340) interacts with Mg(2+).

This sequence belongs to the glycosyltransferase group 1 family. MshA subfamily. In terms of assembly, homodimer.

The enzyme catalyses 1D-myo-inositol 3-phosphate + UDP-N-acetyl-alpha-D-glucosamine = 1D-myo-inositol 2-acetamido-2-deoxy-alpha-D-glucopyranoside 3-phosphate + UDP + H(+). Functionally, catalyzes the transfer of a N-acetyl-glucosamine moiety to 1D-myo-inositol 3-phosphate to produce 1D-myo-inositol 2-acetamido-2-deoxy-glucopyranoside 3-phosphate in the mycothiol biosynthesis pathway. The protein is D-inositol 3-phosphate glycosyltransferase of Mycobacteroides abscessus (strain ATCC 19977 / DSM 44196 / CCUG 20993 / CIP 104536 / JCM 13569 / NCTC 13031 / TMC 1543 / L948) (Mycobacterium abscessus).